The following is a 222-amino-acid chain: Putative N-acetylmannosamine-6-phosphate 2-epimerase (222 aa).

This sequence belongs to the NanE family.

The enzyme catalyses an N-acyl-D-glucosamine 6-phosphate = an N-acyl-D-mannosamine 6-phosphate. It participates in amino-sugar metabolism; N-acetylneuraminate degradation; D-fructose 6-phosphate from N-acetylneuraminate: step 3/5. In terms of biological role, converts N-acetylmannosamine-6-phosphate (ManNAc-6-P) to N-acetylglucosamine-6-phosphate (GlcNAc-6-P). The chain is Putative N-acetylmannosamine-6-phosphate 2-epimerase from Staphylococcus aureus (strain bovine RF122 / ET3-1).